Consider the following 362-residue polypeptide: Phosphoserine aminotransferase (362 aa).

L-glutamate-binding residues include Ser-9 and Arg-42. Residues 76-77 (GR), Trp-102, Thr-153, Asp-174, and Gln-197 contribute to the pyridoxal 5'-phosphate site. Lys-198 carries the N6-(pyridoxal phosphate)lysine modification. Position 239–240 (239–240 (NT)) interacts with pyridoxal 5'-phosphate.

It belongs to the class-V pyridoxal-phosphate-dependent aminotransferase family. SerC subfamily. As to quaternary structure, homodimer. The cofactor is pyridoxal 5'-phosphate.

It is found in the cytoplasm. The catalysed reaction is O-phospho-L-serine + 2-oxoglutarate = 3-phosphooxypyruvate + L-glutamate. The enzyme catalyses 4-(phosphooxy)-L-threonine + 2-oxoglutarate = (R)-3-hydroxy-2-oxo-4-phosphooxybutanoate + L-glutamate. Its pathway is amino-acid biosynthesis; L-serine biosynthesis; L-serine from 3-phospho-D-glycerate: step 2/3. It participates in cofactor biosynthesis; pyridoxine 5'-phosphate biosynthesis; pyridoxine 5'-phosphate from D-erythrose 4-phosphate: step 3/5. In terms of biological role, catalyzes the reversible conversion of 3-phosphohydroxypyruvate to phosphoserine and of 3-hydroxy-2-oxo-4-phosphonooxybutanoate to phosphohydroxythreonine. This Escherichia coli O17:K52:H18 (strain UMN026 / ExPEC) protein is Phosphoserine aminotransferase.